The primary structure comprises 508 residues: Photosystem II CP47 reaction center protein (508 aa).

Helical transmembrane passes span 21 to 36 (AVHI…WAGS), 101 to 115 (IVFS…IWHW), 140 to 156 (GIHL…FGAF), 203 to 218 (IAAG…FHLS), 237 to 252 (VLSS…AFVV), and 457 to 472 (SFAL…HGAR).

Belongs to the PsbB/PsbC family. PsbB subfamily. PSII is composed of 1 copy each of membrane proteins PsbA, PsbB, PsbC, PsbD, PsbE, PsbF, PsbH, PsbI, PsbJ, PsbK, PsbL, PsbM, PsbT, PsbX, PsbY, PsbZ, Psb30/Ycf12, at least 3 peripheral proteins of the oxygen-evolving complex and a large number of cofactors. It forms dimeric complexes. The cofactor is Binds multiple chlorophylls. PSII binds additional chlorophylls, carotenoids and specific lipids..

It localises to the plastid. The protein localises to the chloroplast thylakoid membrane. Functionally, one of the components of the core complex of photosystem II (PSII). It binds chlorophyll and helps catalyze the primary light-induced photochemical processes of PSII. PSII is a light-driven water:plastoquinone oxidoreductase, using light energy to abstract electrons from H(2)O, generating O(2) and a proton gradient subsequently used for ATP formation. This chain is Photosystem II CP47 reaction center protein, found in Buxus microphylla (Littleleaf boxwood).